The chain runs to 252 residues: Phosphoglycolate phosphatase (252 aa).

Residue aspartate 13 is the Nucleophile of the active site. Mg(2+)-binding residues include aspartate 13, aspartate 15, and aspartate 192.

Belongs to the HAD-like hydrolase superfamily. CbbY/CbbZ/Gph/YieH family. In terms of assembly, monomer. Mg(2+) serves as cofactor. Requires chloride as cofactor.

It carries out the reaction 2-phosphoglycolate + H2O = glycolate + phosphate. The protein operates within organic acid metabolism; glycolate biosynthesis; glycolate from 2-phosphoglycolate: step 1/1. In terms of biological role, specifically catalyzes the dephosphorylation of 2-phosphoglycolate. Is involved in the dissimilation of the intracellular 2-phosphoglycolate formed during the DNA repair of 3'-phosphoglycolate ends, a major class of DNA lesions induced by oxidative stress. This chain is Phosphoglycolate phosphatase, found in Shigella sonnei (strain Ss046).